The chain runs to 106 residues: Synaptic plasticity regulator PANTS (106 aa).

The segment at 67–106 (LQQSEKTRLEGKQNNSPVWTLRKNPPPDWYLPLDPGKPRQ) is disordered.

This sequence belongs to the UPF0545 family. Rapidly degraded by proteolysis following neuronal stimulation, resulting in increased AMPA receptor clustering.

The protein localises to the synapse. It is found in the synaptic cleft. Negatively regulates long-term potentiation and modulates adult synaptic plasticity. This chain is Synaptic plasticity regulator PANTS, found in Xenopus laevis (African clawed frog).